The primary structure comprises 713 residues: Macrophage-expressed gene 1 protein (713 aa).

The first 19 residues, 1–19 (MNSFMALVLIWMIIACAEA), serve as a signal peptide directing secretion. Positions 30 to 345 (GFQICKNALK…TAVRHYYTFN (316 aa)) constitute an MACPF domain. C34 and C70 are joined by a disulfide. Beta stranded transmembrane passes span 113-120 (LSINTELA) and 127-132 (GKFSTE). Residue N185 is glycosylated (N-linked (GlcNAc...) asparagine). 2 consecutive transmembrane segments (beta stranded) span residues 235–244 (TVTASAGIAF) and 248–256 (VNFKVETDY). N-linked (GlcNAc...) asparagine glycosylation is present at N269. Cysteines 350 and 369 form a disulfide. N-linked (GlcNAc...) asparagine glycosylation is present at N375. Disulfide bonds link C385–C394, C432–C446, C436–C442, C531–C569, and C554–C574. Residues 410-653 (PPGYSPVHLL…GDSNGMSGGE (244 aa)) are P2. A helical membrane pass occupies residues 654 to 674 (AAGITLGVTIALGIVITLAIY).

The protein belongs to the MPEG1 family. As to quaternary structure, homooligomer; predominantly forms a homooligomeric arc-shaped pore complex instead of complete rings of 16 subunits. Post-translationally, proteolytically processed in two steps to generate the Macrophage-expressed gene 1 protein, processed form: cleaved by trypsin in proximity of the helical transmembrane domain releases the ectodomain into the lysosomal lumen to orient the pore-forming domain toward the endogenous membranes, and processed by the asparagine endopeptidase (LGMN). Proteolytic processing in antigen-containing vesicles is pH-dependent. Monoubiquitinated in response to bacterial infection; ubiquitination is required for vesicular localization and antibacterial activity and can be blocked by bacterial cell cycle inhibiting factor (cif). Expressed constitutively in a variety of cell types including macrophages, microglia, neutrophils, T cells, marginal zone B cells, keratinocytes, splenocytes and intestinal epithelial cells.

The protein resides in the cytoplasmic vesicle membrane. Its subcellular location is the cytoplasmic vesicle. It is found in the phagosome membrane. Its activity is regulated as follows. Forms arc- and ring-shaped pre-pores on top of the membrane at neutral to slightly acidic pH conditions and converts to pores upon acidification. Undergoes transition from the pre-pore to the pore in a processive clockwise hand-over-hand process. In the pore state, 2 alpha-helical regions refold into transmembrane hairpins (TMH1 and TMH2) in each protomer that form in the ensemble complex giant beta-barrel transmembrane pores. Functionally, pore-forming protein involved in both innate and adaptive immunity. Plays a central role in antigen cross-presentation in dendritic cells by forming a pore in antigen-containing compartments, thereby promoting delivery of antigens for cross-presentation. Also involved in innate immune response following bacterial infection; shows antibacterial activity against a wide spectrum of Gram-positive, Gram-negative and acid-fast bacteria. Reduces the viability of the intracytosolic pathogen L.monocytogenes by inhibiting acidification of the phagocytic vacuole of host cells which restricts bacterial translocation from the vacuole to the cytosol. Required for the antibacterial activity of reactive oxygen species and nitric oxide. Its function is as follows. Pore-forming protein that plays a central role in antigen cross-presentation in dendritic cells by mediating delivery of antigens for cross-presentation. Dendritic cells bridge innate and adaptive immunity by capturing exogenous antigens on MHC class-I molecules and presenting them to naive CD8(+) T-cells. Acts by forming a pore in antigen-containing compartments, promoting the release of antigens into the cytosol, enabling generation of MHCI:peptide complexes and T-cell priming. This chain is Macrophage-expressed gene 1 protein, found in Mus musculus (Mouse).